Consider the following 132-residue polypeptide: Small ribosomal subunit protein uS8c (132 aa).

It belongs to the universal ribosomal protein uS8 family. As to quaternary structure, part of the 30S ribosomal subunit.

It localises to the plastid. It is found in the chloroplast. In terms of biological role, one of the primary rRNA binding proteins, it binds directly to 16S rRNA central domain where it helps coordinate assembly of the platform of the 30S subunit. This Angiopteris evecta (Mule's foot fern) protein is Small ribosomal subunit protein uS8c (rps8).